We begin with the raw amino-acid sequence, 1134 residues long: Sterol regulatory element-binding protein 1 (1134 aa).

Residues 1–60 (MDELAFGEAALEQTLAEMCELDTAVLNDIEDMLQLINNQDSDFPGLFDAPYAGGETGDTG) form a transcriptional activation (acidic) region. Residues 1 to 477 (MDELAFGEAA…HSRGMLDRSR (477 aa)) are Cytoplasmic-facing. The short motif at 27–35 (NDIEDMLQL) is the 9aaTAD element. Positions 46 to 73 (LFDAPYAGGETGDTGPSSPGANSPESFS) are disordered. Residues 59 to 69 (TGPSSPGANSP) show a composition bias toward polar residues. A phosphoserine mark is found at serine 96 and serine 115. 2 disordered regions span residues 130–149 (LQPAAPQPSPGTLLPPSFPA) and 170–195 (SGTLPGNTQQPPSSLPLAPAPGVLPT). Polar residues predominate over residues 170 to 179 (SGTLPGNTQQ). The segment at 227–487 (QQVPVVLQPH…LALCVLAFLC (261 aa)) is interaction with LMNA. The bHLH domain occupies 317 to 367 (EKRTAHNAIEKRYRSSINDKIVELKDLVVGTEAKLNKSAVLRKAIDYIRFL). Residues serine 331 and serine 332 each carry the phosphoserine; by SIK1 modification. The tract at residues 367-388 (LQHSNQKLKQENLTLRSAHKSK) is leucine-zipper. Serine 389 carries the post-translational modification Phosphoserine; by AMPK. Phosphoserine; by SIK1 is present on serine 395. Residues 415–468 (VETLTPPPSDAGSPSQSSPLSFGSRASSSGGSDSEPDSPAFEDSQVKAQRLPSH) are disordered. The segment covering 424-453 (DAGSPSQSSPLSFGSRASSSGGSDSEPDSP) has biased composition (low complexity). At serine 448 the chain carries Phosphoserine. The helical transmembrane segment at 478–498 (LALCVLAFLCLTCNPLASLFG) threads the bilayer. Residues 499–536 (WGILTPSDATGTHRSSGRSMLEAESRDGSNWTQWLLPP) lie on the Lumenal side of the membrane. The chain crosses the membrane as a helical span at residues 537–557 (LVWLANGLLVLACLALLFVYG). Residues 558-1134 (EPVTRPHSGP…LGGGTTVTSS (577 aa)) are Cytoplasmic-facing. Residue serine 1047 is modified to Phosphoserine.

The protein belongs to the SREBP family. In terms of assembly, forms a tight complex with SCAP, the SCAP-SREBP complex, in the endoplasmic reticulum membrane and the Golgi apparatus. Interacts with PAQR3; the interaction anchors the SCAP-SREBP complex to the Golgi apparatus in low cholesterol conditions. Efficient DNA binding of the soluble transcription factor fragment requires dimerization with another bHLH protein. Interacts with CEBPA, the interaction produces a transcriptional synergy. Interacts with LMNA. Processed in the Golgi apparatus, releasing the protein from the membrane. At low cholesterol the SCAP-SREBP complex is recruited into COPII vesicles for export from the endoplasmic reticulum. In the Golgi, complex SREBPs are cleaved sequentially by site-1 (MBTPS1, S1P) and site-2 (MBTPS2, S2P) proteases. The first cleavage by site-1 protease occurs within the luminal loop, the second cleavage by site-2 protease occurs within the first transmembrane domain, releasing the transcription factor from the Golgi membrane. Post-translationally, phosphorylated by AMPK, leading to suppress protein processing and nuclear translocation, and repress target gene expression. Phosphorylation at Ser-389 by SIK1 represses activity possibly by inhibiting DNA-binding. In terms of processing, SCAP-free SREBF1 is ubiquitinated by the BCR(ARMC5) complex, leading to its degradation. Ubiquitinated; the nuclear form has a rapid turnover and is rapidly ubiquitinated and degraded by the proteasome in the nucleus. Predominant isoform expressed in most tissues. Predominates in liver, adrenal gland, brain and adipose tissue. Also found in kidney, thymus, testis, muscle, jejunum, and ileum. In terms of tissue distribution, expressed only in select tissues, such as intestinal epithelial, heart, macrophage and bone marrow dendritic cells. Also found in kidney, thymus, testis, muscle, jejunum, and ileum.

It localises to the endoplasmic reticulum membrane. It is found in the golgi apparatus membrane. Its subcellular location is the cytoplasmic vesicle. The protein localises to the COPII-coated vesicle membrane. The protein resides in the nucleus. With respect to regulation, activation by cleavage is down-regulated upon activation of SIRT3-dependent PRKAA1/AMPK-alpha signaling cascade which leads to inhibition of ATP-consuming lipogenesis to restore cellular energy balance. In terms of biological role, precursor of the transcription factor form (Processed sterol regulatory element-binding protein 1), which is embedded in the endoplasmic reticulum membrane. Low sterol concentrations promote processing of this form, releasing the transcription factor form that translocates into the nucleus and activates transcription of genes involved in cholesterol biosynthesis and lipid homeostasis. Functionally, key transcription factor that regulates expression of genes involved in cholesterol biosynthesis and lipid homeostasis. Binds to the sterol regulatory element 1 (SRE-1) (5'-ATCACCCCAC-3'). Has dual sequence specificity binding to both an E-box motif (5'-ATCACGTGA-3') and to SRE-1 (5'-ATCACCCCAC-3'). Regulates the promoters of genes involved in cholesterol biosynthesis and the LDL receptor (LDLR) pathway of sterol regulation. Its function is as follows. Isoform expressed only in select tissues, which has higher transcriptional activity compared to SREBP-1C. Able to stimulate both lipogenic and cholesterogenic gene expression. Has a role in the nutritional regulation of fatty acids and triglycerides in lipogenic organs such as the liver. Required for innate immune response in macrophages by regulating lipid metabolism. Predominant isoform expressed in most tissues, which has weaker transcriptional activity compared to isoform SREBP-1A. Primarily controls expression of lipogenic gene. Strongly activates global lipid synthesis in rapidly growing cells. In Mus musculus (Mouse), this protein is Sterol regulatory element-binding protein 1.